The primary structure comprises 180 residues: Large ribosomal subunit protein uL5 (180 aa).

It belongs to the universal ribosomal protein uL5 family. In terms of assembly, part of the 50S ribosomal subunit; part of the 5S rRNA/L5/L18/L25 subcomplex. Contacts the 5S rRNA and the P site tRNA. Forms a bridge to the 30S subunit in the 70S ribosome.

In terms of biological role, this is one of the proteins that bind and probably mediate the attachment of the 5S RNA into the large ribosomal subunit, where it forms part of the central protuberance. In the 70S ribosome it contacts protein S13 of the 30S subunit (bridge B1b), connecting the 2 subunits; this bridge is implicated in subunit movement. Contacts the P site tRNA; the 5S rRNA and some of its associated proteins might help stabilize positioning of ribosome-bound tRNAs. In Chlamydia trachomatis serovar L2 (strain ATCC VR-902B / DSM 19102 / 434/Bu), this protein is Large ribosomal subunit protein uL5.